Reading from the N-terminus, the 246-residue chain is UL16-binding protein 2 (246 aa).

Residues methionine 1–alanine 25 form the signal peptide. Residues aspartate 29–glutamate 117 are MHC class I alpha-1 like. Cysteines 50 and 66 form a disulfide. N-linked (GlcNAc...) asparagine glycosylation is found at asparagine 68 and asparagine 82. An MHC class I alpha-2 like region spans residues proline 118–glycine 210. Cysteines 127 and 190 form a disulfide. Position 216 (serine 216) interacts with a protein. Serine 217 carries GPI-anchor amidated serine lipidation. Positions glycine 218–isoleucine 246 are cleaved as a propeptide — removed in mature form.

This sequence belongs to the MHC class I family. As to quaternary structure, interacts with KLRK1/NKG2D. Does not bind to beta2-microglobulin. (Microbial infection) In CMV-infected cells, interacts with the viral glycoprotein UL16; this interaction causes ULBP2 retention in the endoplasmic reticulum and cis-Golgi and prevents binding to and activation of KLRK1/NKG2D, providing CMV with an immune evasion mechanism. In terms of tissue distribution, expressed in various types of cancer cell lines and in the fetus, but not in normal tissues.

It is found in the cell membrane. It localises to the endoplasmic reticulum. Its subcellular location is the secreted. Its function is as follows. Binds and activates the KLRK1/NKG2D receptor, mediating natural killer cell cytotoxicity. The sequence is that of UL16-binding protein 2 from Homo sapiens (Human).